Here is a 232-residue protein sequence, read N- to C-terminus: Putative N-acetylmannosamine-6-phosphate 2-epimerase (232 aa).

This sequence belongs to the NanE family.

It catalyses the reaction an N-acyl-D-glucosamine 6-phosphate = an N-acyl-D-mannosamine 6-phosphate. It participates in amino-sugar metabolism; N-acetylneuraminate degradation; D-fructose 6-phosphate from N-acetylneuraminate: step 3/5. Functionally, converts N-acetylmannosamine-6-phosphate (ManNAc-6-P) to N-acetylglucosamine-6-phosphate (GlcNAc-6-P). This is Putative N-acetylmannosamine-6-phosphate 2-epimerase from Borreliella burgdorferi (strain ZS7) (Borrelia burgdorferi).